Consider the following 207-residue polypeptide: Urease accessory protein UreG (207 aa).

14–21 (GPVGSGKT) is a GTP binding site.

Belongs to the SIMIBI class G3E GTPase family. UreG subfamily. Homodimer. UreD, UreF and UreG form a complex that acts as a GTP-hydrolysis-dependent molecular chaperone, activating the urease apoprotein by helping to assemble the nickel containing metallocenter of UreC. The UreE protein probably delivers the nickel.

The protein resides in the cytoplasm. Functionally, facilitates the functional incorporation of the urease nickel metallocenter. This process requires GTP hydrolysis, probably effectuated by UreG. The sequence is that of Urease accessory protein UreG from Rhodopseudomonas palustris (strain BisB18).